Here is a 39-residue protein sequence, read N- to C-terminus: Large ribosomal subunit protein bL36 (39 aa).

It belongs to the bacterial ribosomal protein bL36 family.

This is Large ribosomal subunit protein bL36 from Levilactobacillus brevis (strain ATCC 367 / BCRC 12310 / CIP 105137 / JCM 1170 / LMG 11437 / NCIMB 947 / NCTC 947) (Lactobacillus brevis).